Here is a 132-residue protein sequence, read N- to C-terminus: MAVAKVQYFGTGRRKTSVARVRLVPGNGKIVVNNKAMDDYFGLETLKAIIKQPLQTVEMEDKFDVLVNVRGGGHSGQAEAIRHGIARALVKADGELRPVLKKEGYLTRDPRMKERKKYGLRKARRAPQFSKR.

Positions 104–132 (GYLTRDPRMKERKKYGLRKARRAPQFSKR) are disordered. A compositionally biased stretch (basic residues) spans 113–132 (KERKKYGLRKARRAPQFSKR).

Belongs to the universal ribosomal protein uS9 family.

This chain is Small ribosomal subunit protein uS9, found in Natranaerobius thermophilus (strain ATCC BAA-1301 / DSM 18059 / JW/NM-WN-LF).